The sequence spans 398 residues: Protein RecA (398 aa).

83–90 contributes to the ATP binding site; sequence GPESSGKT. A disordered region spans residues 351 to 398; sequence AGQKNDKKSKLEEKANAGAGISEASEPDSSAEEDFEEFAPIDIGSLGE. Positions 354-365 are enriched in basic and acidic residues; sequence KNDKKSKLEEKA. Over residues 375–389 the composition is skewed to acidic residues; sequence SEPDSSAEEDFEEFA.

It belongs to the RecA family.

The protein localises to the cytoplasm. Its function is as follows. Can catalyze the hydrolysis of ATP in the presence of single-stranded DNA, the ATP-dependent uptake of single-stranded DNA by duplex DNA, and the ATP-dependent hybridization of homologous single-stranded DNAs. It interacts with LexA causing its activation and leading to its autocatalytic cleavage. The protein is Protein RecA of Ruminococcus albus (strain ATCC 27210 / DSM 20455 / JCM 14654 / NCDO 2250 / 7).